Here is a 63-residue protein sequence, read N- to C-terminus: uncharacterized protein (63 aa).

This is an uncharacterized protein from Thermoproteus tenax (TTV1).